We begin with the raw amino-acid sequence, 259 residues long: 3-deoxy-manno-octulosonate cytidylyltransferase (259 aa).

Belongs to the KdsB family.

It localises to the cytoplasm. It carries out the reaction 3-deoxy-alpha-D-manno-oct-2-ulosonate + CTP = CMP-3-deoxy-beta-D-manno-octulosonate + diphosphate. It participates in nucleotide-sugar biosynthesis; CMP-3-deoxy-D-manno-octulosonate biosynthesis; CMP-3-deoxy-D-manno-octulosonate from 3-deoxy-D-manno-octulosonate and CTP: step 1/1. Its pathway is bacterial outer membrane biogenesis; lipopolysaccharide biosynthesis. Its function is as follows. Activates KDO (a required 8-carbon sugar) for incorporation into bacterial lipopolysaccharide in Gram-negative bacteria. The sequence is that of 3-deoxy-manno-octulosonate cytidylyltransferase from Maricaulis maris (strain MCS10) (Caulobacter maris).